Here is a 626-residue protein sequence, read N- to C-terminus: Nuclear RNA export factor 1 (626 aa).

Residues 1–16 (MADEGKSYSEHDDERV) show a composition bias toward basic and acidic residues. The interval 1–85 (MADEGKSYSE…TTRPNRRGDA (85 aa)) is disordered. N-acetylalanine is present on alanine 2. The segment at 2–60 (ADEGKSYSEHDDERVNFPQRKKKGRGPFRWKYGEGNRRSGRGGSGIRSSRLEEDDGDVA) is minor non-specific RNA-binding. The interval 2-118 (ADEGKSYSEH…GTSQDGTSKN (117 aa)) is RNA-binding (RBD). An interaction with ALYREF/THOC4 and LUZP4 region spans residues 2 to 198 (ADEGKSYSEH…IIINPSAPPH (197 aa)). Position 9 is a phosphoserine (serine 9). Residues 20–29 (QRKKKGRGPF) show a composition bias toward basic residues. Arginine 42 is subject to Asymmetric dimethylarginine; alternate. Arginine 42 carries the omega-N-methylarginine; alternate modification. Residues 61–118 (MSDAQDGPRVRYNPYTTRPNRRGDAWHDRDRIHVTVRRDRAPPERGGAGTSQDGTSKN) are major non-specific RNA-binding. Positions 61-118 (MSDAQDGPRVRYNPYTTRPNRRGDAWHDRDRIHVTVRRDRAPPERGGAGTSQDGTSKN) are RNA binding. The short motif at 67 to 100 (GPRVRYNPYTTRPNRRGDAWHDRDRIHVTVRRDR) is the Nuclear localization signal element. The Nuclear export signal signature appears at 83-110 (GDAWHDRDRIHVTVRRDRAPPERGGAGT). The RRM domain occupies 119–198 (WFKITIPYGR…IIINPSAPPH (80 aa)). At tyrosine 126 the chain carries 3'-nitrotyrosine. 4 LRR repeats span residues 266–291 (ELLSLNLSHNRLYRLDDMSSIVQKVP), 292–315 (NLKILNLSGNELKSERELDKIKGL), 316–350 (KLEELWLDGNSLCDTFRDQSTYIRSVVACVSAIRE), and 351–378 (RFPKLLRLDGHELPPPIAFDVEAPTTLP). In terms of domain architecture, NTF2 spans 393–543 (LVLHFLQQYY…LCIVNDELFV (151 aa)). One can recognise a TAP-C domain in the interval 572 to 626 (PEQQEMLQAFSTQSGMNLEWSQKCLQDNNWDYTRSAQAFTHLKAKGEIPEVAFMK).

This sequence belongs to the NXF family. In terms of assembly, heterodimer (via NTF2 domain) with NXT1. The formation of NXF1-NXT1 heterodimers is required for the NXF1-mediated nuclear mRNA export. Forms a complex with RANBP2/NUP358, NXT1 and RANGAP1. Associates with the exon junction complex (EJC) and with the transcription/export (TREX) complex. Found in a mRNA complex with UPF3A and UPF3B. Found in a post-splicing complex with RBM8A, UPF1, UPF2, UPF3A, UPF3B and RNPS1. Interacts (via N-terminus) with DHX9 (via N-terminus); this interaction is direct and negatively regulates NXF1-mediated nuclear export of constitutive transport element (CTE)-containing cellular mRNAs. Interacts with ALYREF/THOC4. Interacts with FYTTD1/UIF. Interacts with EIF4A3. Interacts with NUPL2. Interacts with THOC5. Interacts with CHTOP. Interacts with FRG1 (via N-terminus). Interacts with LUZP4. Interacts with FMR1; the interaction occurs in a mRNA-dependent and polyribosomes-independent manner in the nucleus. Interacts with CPSF6 (via N-terminus); this interaction is direct. Interacts with RBM15. Interacts with RBM15B. Interacts with MCM3AP; this interaction is not mediated by RNA.

Its subcellular location is the nucleus. It localises to the nucleoplasm. The protein resides in the nucleus speckle. The protein localises to the cytoplasm. Its function is as follows. Involved in the nuclear export of mRNA species bearing retroviral constitutive transport elements (CTE) and in the export of mRNA from the nucleus to the cytoplasm (TAP/NFX1 pathway). The NXF1-NXT1 heterodimer is involved in the export of HSP70 mRNA in conjunction with ALYREF/THOC4 and THOC5 components of the TREX complex. ALYREF/THOC4-bound mRNA is thought to be transferred to the NXF1-NXT1 heterodimer for export. Also involved in nuclear export of m6A-containing mRNAs: interaction between SRSF3 and YTHDC1 facilitates m6A-containing mRNA-binding to both SRSF3 and NXF1, promoting mRNA nuclear export. The chain is Nuclear RNA export factor 1 (NXF1) from Pongo abelii (Sumatran orangutan).